Reading from the N-terminus, the 440-residue chain is Sorting nexin-31 (440 aa).

Residues 1–109 enclose the PX domain; it reads MKMHFCIPVS…EFLKLAQLNT (109 aa).

Belongs to the sorting nexin family. In terms of assembly, interacts with CCDC22, CCDC93, VPS26C and VPS35L, associates with the retriever and CCC complexes.

In terms of biological role, may be involved in protein trafficking. This chain is Sorting nexin-31 (SNX31), found in Homo sapiens (Human).